A 520-amino-acid chain; its full sequence is 3-phosphoshikimate 1-carboxyvinyltransferase, chloroplastic (520 aa).

A chloroplast-targeting transit peptide spans 1-76 (MAQVSRICNG…KVMSSVSTAE (76 aa)). Residues 20–39 (LSKSSQRKSPLSVSLKTQQH) are disordered. 3-phosphoshikimate-binding residues include Lys99, Ser100, and Arg104. Phosphoenolpyruvate is bound at residue Lys99. Phosphoenolpyruvate is bound by residues Gly177 and Arg207. 3-phosphoshikimate-binding residues include Ser254, Ser255, Gln256, Ser282, Asp407, and Lys434. Residue Gln256 participates in phosphoenolpyruvate binding. The active-site Proton acceptor is the Asp407. Positions 438, 480, and 505 each coordinate phosphoenolpyruvate.

The protein belongs to the EPSP synthase family.

The protein resides in the plastid. It is found in the chloroplast. It carries out the reaction 3-phosphoshikimate + phosphoenolpyruvate = 5-O-(1-carboxyvinyl)-3-phosphoshikimate + phosphate. The protein operates within metabolic intermediate biosynthesis; chorismate biosynthesis; chorismate from D-erythrose 4-phosphate and phosphoenolpyruvate: step 6/7. Catalyzes the transfer of the enolpyruvyl moiety of phosphoenolpyruvate (PEP) to the 5-hydroxyl of shikimate-3-phosphate (S3P) to produce enolpyruvyl shikimate-3-phosphate and inorganic phosphate. This chain is 3-phosphoshikimate 1-carboxyvinyltransferase, chloroplastic, found in Arabidopsis thaliana (Mouse-ear cress).